The primary structure comprises 759 residues: Protein MEI2-like 3 (759 aa).

2 consecutive RRM domains span residues 166 to 239 (RTLF…FSIP) and 251 to 324 (GTLV…HSRP).

In terms of biological role, probable RNA-binding protein that plays a role in meiosis and vegetative growth. This chain is Protein MEI2-like 3 (ML3), found in Arabidopsis thaliana (Mouse-ear cress).